The following is a 507-amino-acid chain: ATP synthase subunit alpha (507 aa).

170–177 is a binding site for ATP; sequence GDRQTGKT.

Belongs to the ATPase alpha/beta chains family. In terms of assembly, F-type ATPases have 2 components, CF(1) - the catalytic core - and CF(0) - the membrane proton channel. CF(1) has five subunits: alpha(3), beta(3), gamma(1), delta(1), epsilon(1). CF(0) has three main subunits: a(1), b(2) and c(9-12). The alpha and beta chains form an alternating ring which encloses part of the gamma chain. CF(1) is attached to CF(0) by a central stalk formed by the gamma and epsilon chains, while a peripheral stalk is formed by the delta and b chains.

It is found in the cell inner membrane. The catalysed reaction is ATP + H2O + 4 H(+)(in) = ADP + phosphate + 5 H(+)(out). Produces ATP from ADP in the presence of a proton gradient across the membrane. The alpha chain is a regulatory subunit. In Thermosipho africanus (strain TCF52B), this protein is ATP synthase subunit alpha.